We begin with the raw amino-acid sequence, 1169 residues long: Chromosome partition protein Smc (1169 aa).

32 to 39 is an ATP binding site; that stretch reads PNGSGKSN. A coiled-coil region spans residues 166–507; sequence DEISGIAEFD…RIKALKEMEE (342 aa). The SMC hinge domain occupies 523–636; that stretch reads PGIIDIVGNL…ENIDIAKELA (114 aa). A coiled-coil region spans residues 676–1030; that stretch reads SKLNKIADEI…NKKKEVFMEV (355 aa).

It belongs to the SMC family. Homodimer.

Its subcellular location is the cytoplasm. Its function is as follows. Required for chromosome condensation and partitioning. The sequence is that of Chromosome partition protein Smc from Methanocaldococcus jannaschii (strain ATCC 43067 / DSM 2661 / JAL-1 / JCM 10045 / NBRC 100440) (Methanococcus jannaschii).